Reading from the N-terminus, the 451-residue chain is MTSRSYCVVGGGISGLTAAYRLRVATGDDVAITLFDPGDRLGGVLRTECVGGQPMDLGAEAFLLRRPEVPALLAELGLSERQRATTDARPLIYSQQRLHSLPPDTVAGIPSSATSVAGLVDDATVARIGAEAVRPLSWEPGSDPAMAELVADRFGEQAVARLVDPLLGGVYAGSAATIGLRAGAPSVAAALDCGATSLMEAVRQGLPPVAAGPVFGALDGGYQVLIDELVRRSRLQWVAATVVGLDRGTCGWTLVDDTGACWSADGVILAVPAPRLVRLLQQIAPRTVAAASRIVSASSAVVALSVPRDTTFPQNSGVLVASGERLRAKAVTLSSRKWGLQGDTQLVRLSFGKFGDQVASTASDDELLAWAVSDLAAVFDVTVDPVDVCVQRWIDAMPQYGPGHADLVAEVRAGLPPTLVVAGSHMDGIGVPACISAAGRAIEALQAEVAR.

FAD-binding positions include 10–15 (GGGISG), 36–37 (DP), 58–61 (GAEA), Val-242, Trp-393, and 429–431 (IGV).

The protein belongs to the protoporphyrinogen/coproporphyrinogen oxidase family. Coproporphyrinogen III oxidase subfamily. The cofactor is FAD.

The protein localises to the cytoplasm. It carries out the reaction coproporphyrinogen III + 3 O2 = coproporphyrin III + 3 H2O2. It participates in porphyrin-containing compound metabolism; protoheme biosynthesis. In terms of biological role, involved in coproporphyrin-dependent heme b biosynthesis. Catalyzes the oxidation of coproporphyrinogen III to coproporphyrin III. The chain is Coproporphyrinogen III oxidase from Mycobacterium leprae (strain TN).